Consider the following 549-residue polypeptide: Putative lipase ATG15 (549 aa).

Over 1-19 (MKQDLYKESSPPPSTTKSK) the chain is Cytoplasmic. A helical; Signal-anchor for type II membrane protein membrane pass occupies residues 20 to 42 (GLYVIVAALVTTAIYLLYSQGYS). The Lumenal segment spans residues 43-549 (NTHGEKDMPS…SHTVTHVTMA (507 aa)). 2 N-linked (GlcNAc...) asparagine glycosylation sites follow: asparagine 204 and asparagine 315. Serine 331 acts as the Charge relay system in catalysis. Asparagine 448 carries N-linked (GlcNAc...) asparagine glycosylation. Positions 474 to 510 (DDDDKDKKKKKKTSTSSSVVSKTKTSTSSTVATNTMP) are disordered. Residues 487-504 (STSSSVVSKTKTSTSSTV) are compositionally biased toward low complexity.

Belongs to the AB hydrolase superfamily. Lipase family. In terms of assembly, binds to both phosphatidylinositol (PI) and phosphatidylinositol 3,5-bisphosphate (PIP2).

The protein resides in the endosome. The protein localises to the multivesicular body membrane. Its subcellular location is the prevacuolar compartment membrane. The catalysed reaction is a triacylglycerol + H2O = a diacylglycerol + a fatty acid + H(+). In terms of biological role, lipase which is essential for lysis of subvacuolar cytoplasm to vacuole targeted bodies and intravacuolar autophagic bodies. Involved in the lysis of intravacuolar multivesicular body (MVB) vesicles. The intravacuolar membrane disintegration by ATG15 is critical to life span extension. This Yarrowia lipolytica (strain CLIB 122 / E 150) (Yeast) protein is Putative lipase ATG15 (ATG15).